We begin with the raw amino-acid sequence, 613 residues long: Carotenoid dioxygenase (613 aa).

Positions 1–25 (MSPHEVIGTVPKNSTTFRTQADEHD) are disordered. The Fe(2+) site is built by His-261, His-313, His-383, and His-595.

Belongs to the carotenoid oxygenase family. Fe(2+) serves as cofactor.

Its subcellular location is the cytoplasm. The protein localises to the cytosol. The catalysed reaction is torulene + O2 = 4'-apo-beta-carotenal + 3-methyl-2-butenal. The protein operates within carotenoid biosynthesis. Functionally, torulene dioxygenase; part of pathway that mediates the biosynthesis of neurosporaxanthin, a carboxylic apocarotenoid acting as an essential protective pigments and leading to orange pigmentation. Cao-2 mediates the cleavage of torulene into beta-apo-4'-carotenal, the aldehyde corresponding to the acidic neurosporaxanthin. Is not able to use gamma-carotene (that it is not desaturated at the C4'-C5' bond) as substrate, which suggests a high specificity of cao-2 in cleaving the C4'-C5' double bond. Neurosporaxanthin is synthesized from geranyl-geranyl pyrophosphate (GGPP) through several enzymatic activities. Phytoene synthase activity performed by the bifunctional enzyme al-2 first produces phytoene from geranyl-geranyl pyrophosphate (GGPP). The phytoene dehydrogenase al-1 then introduces 5 desaturations to lead to 3,4-didehydrolycopene via the intermediates phytofluene, zeta-carotene, neurosporene and lycopene. Al-2 cyclase activity then converts 3,4-didehydrolycopene into torulene. Al-2 can also convet lycopene into gamma-carotene which in turn is converted to beta-carotene by an additional al-2 cyclization reaction. Torulene is the substrate of the dioxidase cao-2 that breaks the molecule, removing five carbon atoms to yield beta-apo-4'-carotenal, whereas the aldehyde dehydrogenase ylo-1 mediates the last step by converting beta-apo-4'-carotenal into neurosporaxanthin. In Neurospora crassa (strain ATCC 24698 / 74-OR23-1A / CBS 708.71 / DSM 1257 / FGSC 987), this protein is Carotenoid dioxygenase.